A 356-amino-acid polypeptide reads, in one-letter code: tRNA N6-adenosine threonylcarbamoyltransferase (356 aa).

2 residues coordinate Fe cation: histidine 110 and histidine 114. Substrate is bound by residues 132–136, aspartate 165, glycine 178, aspartate 182, and asparagine 288; that span reads LVSGG. Position 316 (aspartate 316) interacts with Fe cation.

The protein belongs to the KAE1 / TsaD family. It depends on Fe(2+) as a cofactor.

The protein resides in the cytoplasm. It carries out the reaction L-threonylcarbamoyladenylate + adenosine(37) in tRNA = N(6)-L-threonylcarbamoyladenosine(37) in tRNA + AMP + H(+). In terms of biological role, required for the formation of a threonylcarbamoyl group on adenosine at position 37 (t(6)A37) in tRNAs that read codons beginning with adenine. Is involved in the transfer of the threonylcarbamoyl moiety of threonylcarbamoyl-AMP (TC-AMP) to the N6 group of A37, together with TsaE and TsaB. TsaD likely plays a direct catalytic role in this reaction. This is tRNA N6-adenosine threonylcarbamoyltransferase from Maridesulfovibrio salexigens (strain ATCC 14822 / DSM 2638 / NCIMB 8403 / VKM B-1763) (Desulfovibrio salexigens).